The chain runs to 122 residues: Large ribosomal subunit protein bL12 (122 aa).

This sequence belongs to the bacterial ribosomal protein bL12 family. Homodimer. Part of the ribosomal stalk of the 50S ribosomal subunit. Forms a multimeric L10(L12)X complex, where L10 forms an elongated spine to which 2 to 4 L12 dimers bind in a sequential fashion. Binds GTP-bound translation factors.

In terms of biological role, forms part of the ribosomal stalk which helps the ribosome interact with GTP-bound translation factors. Is thus essential for accurate translation. The chain is Large ribosomal subunit protein bL12 from Buchnera aphidicola subsp. Acyrthosiphon pisum (strain Tuc7).